Consider the following 92-residue polypeptide: MSSITRDGQPALRAGVRLQYDRARDQWVLLAPERVVELDEIALVVAQRYDGTRSLAQIAQELAAEFDADAADIEADVIELTATLQQKRLLRL.

This sequence belongs to the PqqD family. As to quaternary structure, monomer. Interacts with PqqE.

Its pathway is cofactor biosynthesis; pyrroloquinoline quinone biosynthesis. In terms of biological role, functions as a PqqA binding protein and presents PqqA to PqqE, in the pyrroloquinoline quinone (PQQ) biosynthetic pathway. This is PqqA binding protein from Xanthomonas oryzae pv. oryzae (strain PXO99A).